A 337-amino-acid polypeptide reads, in one-letter code: Metacaspase III c (337 aa).

Propeptides lie at residues 1–6 (MGFLRR) and 116–125 (VPPAATGTRR). The residue at position 202 (C202) is a Cysteine sulfenic acid (-SOH). A disulfide bond links C202 and C259. The active site involves H207. Ca(2+) is bound by residues D224, D240, and D241. The active site involves C264. Residue D271 coordinates Ca(2+). A propeptide spanning residues 290-337 (NFDFKKLLGKFGIDDFDKFGGEALGKINGDALGKVGKDALGKLNKFFG) is cleaved from the precursor.

Belongs to the peptidase C14B family. Auto-proteolytic cleavage into a large and a small subunit which probably remain associated by non-covalent bonds. Post-translationally, following oxidative stress, the oxidation of Cys-202 leads to the formation of a disulfide bond between Cys-202 and Cys-259 which enhances catalytic activity.

Activated by Ca(2+). Its function is as follows. Cysteine protease that cleaves specifically after arginine residues. This is Metacaspase III c from Phaeodactylum tricornutum (strain CCAP 1055/1).